Consider the following 261-residue polypeptide: Phosphonates import ATP-binding protein PhnC (261 aa).

The ABC transporter domain occupies 9–253 (IQLKDVSKIY…VFDDIYNGGN (245 aa)). ATP is bound at residue 42–49 (GLSGAGKS).

This sequence belongs to the ABC transporter superfamily. Phosphonates importer (TC 3.A.1.9.1) family. As to quaternary structure, the complex is composed of two ATP-binding proteins (PhnC), two transmembrane proteins (PhnE) and a solute-binding protein (PhnD).

The protein resides in the cell membrane. It carries out the reaction phosphonate(out) + ATP + H2O = phosphonate(in) + ADP + phosphate + H(+). Part of the ABC transporter complex PhnCDE involved in phosphonates import. Responsible for energy coupling to the transport system. This Lactobacillus gasseri (strain ATCC 33323 / DSM 20243 / BCRC 14619 / CIP 102991 / JCM 1131 / KCTC 3163 / NCIMB 11718 / NCTC 13722 / AM63) protein is Phosphonates import ATP-binding protein PhnC.